Reading from the N-terminus, the 596-residue chain is Pentatricopeptide repeat-containing protein At1g50270 (596 aa).

PPR repeat units lie at residues 66–102, 103–136, 137–167, 168–202, 203–237, 239–269, 270–304, 305–339, 340–370, 371–405, 406–436, and 442–472; these read SIQL…GVIP, SRHT…GLDS, DPFV…AEDK, DVVT…GVAA, NEMT…GRVK, DVFI…MPSR, NVVT…DVAP, NEKT…SIEI, NTTA…LHEK, NVYT…HVSP, NEVT…MKGR, and KADH…MPME. Residues 477–552 are type E motif; that stretch reads VWGALFGSCL…SPGFSWIEVK (76 aa). A type E(+) motif region spans residues 553–584; it reads GKLCEFIAFDDKKPLESDDLYKTLDTVGVQMR.

This sequence belongs to the PPR family. PCMP-E subfamily.

The polypeptide is Pentatricopeptide repeat-containing protein At1g50270 (PCMP-E42) (Arabidopsis thaliana (Mouse-ear cress)).